We begin with the raw amino-acid sequence, 133 residues long: Nucleoside diphosphate kinase (133 aa).

ATP contacts are provided by lysine 9, phenylalanine 57, arginine 85, threonine 91, arginine 102, and asparagine 112. Histidine 115 serves as the catalytic Pros-phosphohistidine intermediate.

This sequence belongs to the NDK family. As to quaternary structure, homotetramer. It depends on Mg(2+) as a cofactor.

The protein resides in the cytoplasm. It carries out the reaction a 2'-deoxyribonucleoside 5'-diphosphate + ATP = a 2'-deoxyribonucleoside 5'-triphosphate + ADP. The enzyme catalyses a ribonucleoside 5'-diphosphate + ATP = a ribonucleoside 5'-triphosphate + ADP. Functionally, major role in the synthesis of nucleoside triphosphates other than ATP. The ATP gamma phosphate is transferred to the NDP beta phosphate via a ping-pong mechanism, using a phosphorylated active-site intermediate. The protein is Nucleoside diphosphate kinase of Rubrobacter xylanophilus (strain DSM 9941 / JCM 11954 / NBRC 16129 / PRD-1).